We begin with the raw amino-acid sequence, 75 residues long: MDAEAAKMIGAGLAAIGMIGSGIGVGNIWANLIATVGRNPAAKSTVELYGWIGFAVTEAIALFALVVALILLFAA.

The next 2 membrane-spanning stretches (helical) occupy residues 9–29 (IGAGLAAIGMIGSGIGVGNIW) and 52–72 (IGFAVTEAIALFALVVALILL).

This sequence belongs to the ATPase C chain family. In terms of assembly, F-type ATPases have 2 components, F(1) - the catalytic core - and F(0) - the membrane proton channel. F(1) has five subunits: alpha(3), beta(3), gamma(1), delta(1), epsilon(1). F(0) has four main subunits: a(1), b(1), b'(1) and c(10-14). The alpha and beta chains form an alternating ring which encloses part of the gamma chain. F(1) is attached to F(0) by a central stalk formed by the gamma and epsilon chains, while a peripheral stalk is formed by the delta, b and b' chains.

It localises to the cell inner membrane. In terms of biological role, f(1)F(0) ATP synthase produces ATP from ADP in the presence of a proton or sodium gradient. F-type ATPases consist of two structural domains, F(1) containing the extramembraneous catalytic core and F(0) containing the membrane proton channel, linked together by a central stalk and a peripheral stalk. During catalysis, ATP synthesis in the catalytic domain of F(1) is coupled via a rotary mechanism of the central stalk subunits to proton translocation. Its function is as follows. Key component of the F(0) channel; it plays a direct role in translocation across the membrane. A homomeric c-ring of between 10-14 subunits forms the central stalk rotor element with the F(1) delta and epsilon subunits. This chain is ATP synthase subunit c, found in Rhodospirillum rubrum (strain ATCC 11170 / ATH 1.1.1 / DSM 467 / LMG 4362 / NCIMB 8255 / S1).